A 1153-amino-acid polypeptide reads, in one-letter code: Nitric oxide synthase, inducible (1153 aa).

The short motif at 23-27 (DINNN) is the DINNN-motif; mediates interaction with SPSB1, SPSB2 and SPSB4 element. Positions 110 and 115 each coordinate Zn(2+). Ser-118 lines the (6R)-L-erythro-5,6,7,8-tetrahydrobiopterin pocket. Cys-200 contributes to the heme b binding site. Ser-234 carries the phosphoserine; by PKA modification. The L-arginine site is built by Gln-263, Trp-372, Tyr-373, and Glu-377. Positions 381, 462, 463, and 476 each coordinate (6R)-L-erythro-5,6,7,8-tetrahydrobiopterin. Tyr-491 serves as a coordination point for heme b. The tract at residues 515 to 535 (LKVLVKAVLFACMLMRKTMAS) is calmodulin-binding. One can recognise a Flavodoxin-like domain in the interval 539-677 (VTILFATETG…AFRSWAVQTF (139 aa)). Thr-545, Glu-546, Thr-547, Lys-549, and Ser-550 together coordinate FMN. A Phosphotyrosine modification is found at Tyr-575. Ser-578 carries the post-translational modification Phosphoserine; by PKA. 7 residues coordinate FMN: Ser-591, Thr-592, Ser-628, Arg-633, Cys-635, Glu-661, and Gln-665. Residues 730-970 (KNVFTMRLKS…VRNASGFHLP (241 aa)) enclose the FAD-binding FR-type domain. NADP(+) is bound at residue Arg-750. Residue His-772 coordinates FAD. A Phosphoserine; by PKA modification is found at Ser-892. The FAD site is built by Arg-906, Tyr-908, Ser-909, Thr-924, and Ala-926. Position 929 (Thr-929) interacts with NADP(+). Positions 930, 943, 944, and 945 each coordinate FAD. NADP(+) contacts are provided by Thr-984, Arg-1017, Ser-1046, Arg-1047, Lys-1053, Tyr-1055, Gln-1057, and Asp-1090.

It belongs to the NOS family. As to quaternary structure, homodimer. Interacts with NHERF1. Interacts with GAPDH; induced by oxidatively-modified low-densitity lipoprotein (LDL(ox)). Interacts with S100A8 and S100A9 to form the iNOS-S100A8/9 transnitrosylase complex. Interacts with SPSB1, SPSB2 and SPSB4. Interacts with ELOC and CUL5 in the presence of SPSB1 or SPSB2 or SPSB4. Forms a complex with ASL, ASS1 and HSP90AA1; the complex regulates cell-autonomous L-arginine synthesis and citrulline recycling while channeling extracellular L-arginine to nitric oxide synthesis pathway. Heme b is required as a cofactor. Requires FAD as cofactor. The cofactor is FMN. (6R)-L-erythro-5,6,7,8-tetrahydrobiopterin serves as cofactor. Post-translationally, polyubiquitinated; mediated by SPSB1, SPSB2 and SPSB4, leading to proteasomal degradation. Expressed in the liver, retina, bone cells and airway epithelial cells of the lung. Not expressed in the platelets. Expressed in chondrocytes.

It localises to the cytoplasm. It is found in the cytosol. It carries out the reaction 2 L-arginine + 3 NADPH + 4 O2 + H(+) = 2 L-citrulline + 2 nitric oxide + 3 NADP(+) + 4 H2O. With respect to regulation, regulated by calcium/calmodulin. Aspirin inhibits expression and function of this enzyme and effects may be exerted at the level of translational/post-translational modification and directly on the catalytic activity. In terms of biological role, produces nitric oxide (NO) which is a messenger molecule with diverse functions throughout the body. In macrophages, NO mediates tumoricidal and bactericidal actions. Also has nitrosylase activity and mediates cysteine S-nitrosylation of cytoplasmic target proteins such PTGS2/COX2. As component of the iNOS-S100A8/9 transnitrosylase complex involved in the selective inflammatory stimulus-dependent S-nitrosylation of GAPDH on 'Cys-247' implicated in regulation of the GAIT complex activity and probably multiple targets including ANXA5, EZR, MSN and VIM. Involved in inflammation, enhances the synthesis of pro-inflammatory mediators such as IL6 and IL8. The chain is Nitric oxide synthase, inducible from Homo sapiens (Human).